A 479-amino-acid chain; its full sequence is tRNA-2-methylthio-N(6)-dimethylallyladenosine synthase (479 aa).

Positions 6–122 (KTVYIKTVGC…IPDMLTKVTS (117 aa)) constitute an MTTase N-terminal domain. Cys-15, Cys-51, Cys-85, Cys-172, Cys-176, and Cys-179 together coordinate [4Fe-4S] cluster. The region spanning 158–390 (RPTPFQAYLR…LAVQDRISKE (233 aa)) is the Radical SAM core domain. Positions 393 to 464 (QKLIGDTVEV…SHTLIGRVKT (72 aa)) constitute a TRAM domain.

Belongs to the methylthiotransferase family. MiaB subfamily. As to quaternary structure, monomer. It depends on [4Fe-4S] cluster as a cofactor.

It is found in the cytoplasm. The enzyme catalyses N(6)-dimethylallyladenosine(37) in tRNA + (sulfur carrier)-SH + AH2 + 2 S-adenosyl-L-methionine = 2-methylsulfanyl-N(6)-dimethylallyladenosine(37) in tRNA + (sulfur carrier)-H + 5'-deoxyadenosine + L-methionine + A + S-adenosyl-L-homocysteine + 2 H(+). Its function is as follows. Catalyzes the methylthiolation of N6-(dimethylallyl)adenosine (i(6)A), leading to the formation of 2-methylthio-N6-(dimethylallyl)adenosine (ms(2)i(6)A) at position 37 in tRNAs that read codons beginning with uridine. The protein is tRNA-2-methylthio-N(6)-dimethylallyladenosine synthase of Rhodopirellula baltica (strain DSM 10527 / NCIMB 13988 / SH1).